The chain runs to 91 residues: C-C motif chemokine 5 (91 aa).

The first 23 residues, 1-23, serve as a signal peptide directing secretion; sequence MKISAAVLTVVLMAASLCAPASA. 2 disulfide bridges follow: Cys33-Cys57 and Cys34-Cys73.

Belongs to the intercrine beta (chemokine CC) family.

It is found in the secreted. Its function is as follows. Chemoattractant for blood monocytes, memory T-helper cells and eosinophils. Causes the release of histamine from basophils and activates eosinophils. May activate several chemokine receptors including CCR1, CCR3, CCR4 and CCR5. May also be an agonist of the G protein-coupled receptor GPR75. Together with GPR75, may play a role in neuron survival through activation of a downstream signaling pathway involving the PI3, Akt and MAP kinases. By activating GPR75 may also play a role in insulin secretion by islet cells. In Sigmodon hispidus (Hispid cotton rat), this protein is C-C motif chemokine 5 (CCL5).